The following is a 276-amino-acid chain: Formamidopyrimidine-DNA glycosylase (276 aa).

The active-site Schiff-base intermediate with DNA is P2. E3 serves as the catalytic Proton donor. Catalysis depends on K60, which acts as the Proton donor; for beta-elimination activity. DNA-binding residues include H93 and R112. The FPG-type zinc finger occupies 240–274; that stretch reads NVYGKKGEPCVTCGTILEKTVVGGRGTHYCPICQP. R264 acts as the Proton donor; for delta-elimination activity in catalysis.

The protein belongs to the FPG family. In terms of assembly, monomer. Zn(2+) is required as a cofactor.

The catalysed reaction is Hydrolysis of DNA containing ring-opened 7-methylguanine residues, releasing 2,6-diamino-4-hydroxy-5-(N-methyl)formamidopyrimidine.. It carries out the reaction 2'-deoxyribonucleotide-(2'-deoxyribose 5'-phosphate)-2'-deoxyribonucleotide-DNA = a 3'-end 2'-deoxyribonucleotide-(2,3-dehydro-2,3-deoxyribose 5'-phosphate)-DNA + a 5'-end 5'-phospho-2'-deoxyribonucleoside-DNA + H(+). Functionally, involved in base excision repair of DNA damaged by oxidation or by mutagenic agents. Acts as a DNA glycosylase that recognizes and removes damaged bases. Has a preference for oxidized purines, such as 7,8-dihydro-8-oxoguanine (8-oxoG). Has AP (apurinic/apyrimidinic) lyase activity and introduces nicks in the DNA strand. Cleaves the DNA backbone by beta-delta elimination to generate a single-strand break at the site of the removed base with both 3'- and 5'-phosphates. The polypeptide is Formamidopyrimidine-DNA glycosylase (Bacillus anthracis).